Consider the following 1371-residue polypeptide: MRGLACLLAMLVGIQAIERLRLADGPHGCAGRLEVWHSGRWGTVCDDGWDLRDAEVACRVLGCGGALAAPGGAFFGEGTGPVWLSELNCRGNEGQLGICPHRGWKAHICSHEEDAGVVCVGQRAANSREDSMSLLDGDPWLALSGELSPSSEEPPITHAPQPAASSQNGPRKKNPRPPKQTKSTRAPVLTNGAPHQERLRLVSGPHGCAGRLEVWHGGRWGTVCDDGWDLRDAAVACRELGCGGALAAPGGARFGPGEGPVWMDDVGCGGGEEALRDCPRSPWGRSNCDHTEDAGLVCTGPAPRIRLADGPHGCAGRLEVWHGGRWGSVCDDAWDLRDAAVACKELGCGGALAAPGGAFFGEGTGPIILDDLRCRGNETALRFCPARPWGQHDCHHREDAGAVCDGMPLGAVQPTVPAVDSNSTAHRLLSTSVGQMPGPAGPWPPSASPTAPPEPGPEAGSPQLRLVAGPSRCSGRLEVWHDGRWGTVCDDSWDMRDSAVVCRELGCGRPRQPDPAAGRFGWGAGPIWLDDVGCMGTEASLSECPAASWGKHNCAHNEDVGVTCTGTPGLDTISDPFSWSWLPGLGRDQDAWLPGELTTKPSASLTSSVPQKPTKVPGKAPKSTKKWVTKNARRPTTQPPGMPTTKHSRAPGTPTSLHPTARTSELPKRLTTEAPHRQTSHTTVRLTPRVPWEWTSEPVVSQSTQGPQEVTSEATTTENPQTSLEPSGENTEGSLESSQDPATTPTAGVPVPSGPFRVRLADGPNRCAGRLEVWHAGLWGTVCDDSWDIRDATVACWELGCGKVRPRVGKTHYGPGTGPIWLDDMGCKGSEMSLSDCPSGAWGKHNCDHEEDVVLTCTGYTGDDDYPSWTWDPTSGEDLTKGTTVAARPGHTLSWATTTNTEVPSPATQNLPDTDDQGGYESSWTWDTPSGRGLFKGTPTTTKPGSTVTTSTSKSPGHPFPAPRARAGSPRKPTPERRPLPTSATTSSPASSSSPEPSGSRQTSGSWPQLIPDSKQEGTSSSPKPSLLTPGLPSPATFALSTPNTSLLPTRSPELSGSPTPTSPEGLTSASSMLSEVSRLSPTSELTPGPDTTPAPEIIPESSDSSDLPMNTRTPTQPFTASHPTSIPQLNTTSYPTIAPQPTTNPQQPRSPHPATSPQPPTNTHPSSTPATPTESLPSSRKTELSSPTKPRLNSELTFEEAPSTDASQTQNLELFLASESGPSSPSPASNLDPLPTDAFKPPRSQTLHSASDHLTQGPTPNHNPDPFGPCVSPLPPVRVMACEPPALVELVGAVREVGDQLQRLTWVLEQDRQERQVLALGLAQLVEAAQGLGQLSETVKRLAEVAWPPSTPVPMTTTTEEEERPLRGDV.

Residues 1 to 16 form the signal peptide; it reads MRGLACLLAMLVGIQA. An SRCR 1 domain is found at 20–120; sequence LRLADGPHGC…HEEDAGVVCV (101 aa). 3 disulfide bridges follow: cysteine 45–cysteine 109, cysteine 58–cysteine 119, and cysteine 89–cysteine 99. Positions 143-154 are enriched in low complexity; sequence LSGELSPSSEEP. Residues 143-200 are disordered; that stretch reads LSGELSPSSEEPPITHAPQPAASSQNGPRKKNPRPPKQTKSTRAPVLTNGAPHQERLR. 2 SRCR domains span residues 199–299 and 305–405; these read LRLV…LVCT and IRLA…AVCD. 6 disulfides stabilise this stretch: cysteine 224–cysteine 288, cysteine 237–cysteine 298, cysteine 268–cysteine 278, cysteine 330–cysteine 394, cysteine 343–cysteine 404, and cysteine 374–cysteine 384. Asparagine 377 and asparagine 422 each carry an N-linked (GlcNAc...) asparagine glycan. The tract at residues 431 to 466 is disordered; that stretch reads TSVGQMPGPAGPWPPSASPTAPPEPGPEAGSPQLRL. Pro residues predominate over residues 439–456; that stretch reads PAGPWPPSASPTAPPEPG. The SRCR 4 domain occupies 464-565; sequence LRLVAGPSRC…HNEDVGVTCT (102 aa). 3 disulfide bridges follow: cysteine 489–cysteine 554, cysteine 502–cysteine 564, and cysteine 534–cysteine 544. The tract at residues 592–756 is disordered; the sequence is WLPGELTTKP…AGVPVPSGPF (165 aa). A compositionally biased stretch (polar residues) spans 599–611; it reads TKPSASLTSSVPQ. Positions 622 to 633 are enriched in basic residues; it reads KSTKKWVTKNAR. The segment covering 653 to 663 has biased composition (polar residues); sequence TPTSLHPTART. Over residues 665–676 the composition is skewed to basic and acidic residues; sequence ELPKRLTTEAPH. Positions 698–740 are enriched in polar residues; that stretch reads PVVSQSTQGPQEVTSEATTTENPQTSLEPSGENTEGSLESSQD. Low complexity predominate over residues 741–755; that stretch reads PATTPTAGVPVPSGP. The SRCR 5 domain occupies 758-858; the sequence is VRLADGPNRC…HEEDVVLTCT (101 aa). Cystine bridges form between cysteine 783/cysteine 847, cysteine 796/cysteine 857, and cysteine 827/cysteine 837. 2 disordered regions span residues 888–1270 and 1351–1371; these read RPGH…PFGP and STPV…RGDV. Polar residues predominate over residues 894 to 912; that stretch reads SWATTTNTEVPSPATQNLP. 3 stretches are compositionally biased toward low complexity: residues 936 to 957, 981 to 1004, and 1018 to 1035; these read KGTP…KSPG, PTSA…RQTS, and GTSS…LPSP. 2 stretches are compositionally biased toward polar residues: residues 1039–1086 and 1102–1148; these read ALST…TSEL and SSDS…NPQQ. Residues asparagine 1044 and asparagine 1131 are each glycosylated (N-linked (GlcNAc...) asparagine). Over residues 1149-1163 the composition is skewed to pro residues; sequence PRSPHPATSPQPPTN. The segment covering 1164-1189 has biased composition (polar residues); that stretch reads THPSSTPATPTESLPSSRKTELSSPT. A compositionally biased stretch (low complexity) spans 1218–1230; sequence ASESGPSSPSPAS. A compositionally biased stretch (polar residues) spans 1244 to 1261; it reads RSQTLHSASDHLTQGPTP.

As to quaternary structure, interacts with LGALS1 and laminin. Post-translationally, partially N- and O-glycosylated. In terms of tissue distribution, detected throughout the gastrointestinal and genitourinary tracts, in serosal salivary gland, the exocrine part of pancreas and testis, as well as in a few tubular structures in kidney. Not detected in lung and heart (at protein level). Strongly expressed in testis, kidney and pancreas, with lower levels detected in bone marrow, spleen, lung, liver, colon, stomach and skeletal muscle. Very low levels or no expression detected in thymus, esophagus, jejunum, ileum, duodenum, ovary, uterus, heart, trachea, brain, cerebellum and bladder.

The protein localises to the secreted. It localises to the cytoplasm. Functionally, binds to extracellular matrix proteins. Binds to pathogen-associated molecular patterns (PAMPs) present on the cell walls of Gram-positive and Gram-negative bacteria and fungi, behaving as a pattern recognition receptor (PRR). Induces bacterial and fungal aggregation and subsequent inhibition of PAMP-induced cytokine release. Does not possess intrinsic bactericidal activity. May play a role in the innate defense and homeostasis of certain epithelial surfaces. The sequence is that of Soluble scavenger receptor cysteine-rich domain-containing protein SSC5D (Ssc5d) from Mus musculus (Mouse).